The primary structure comprises 158 residues: NAD(P)H-quinone oxidoreductase subunit J, chloroplastic (158 aa).

Belongs to the complex I 30 kDa subunit family. NDH is composed of at least 16 different subunits, 5 of which are encoded in the nucleus.

The protein localises to the plastid. It localises to the chloroplast thylakoid membrane. It catalyses the reaction a plastoquinone + NADH + (n+1) H(+)(in) = a plastoquinol + NAD(+) + n H(+)(out). It carries out the reaction a plastoquinone + NADPH + (n+1) H(+)(in) = a plastoquinol + NADP(+) + n H(+)(out). Its function is as follows. NDH shuttles electrons from NAD(P)H:plastoquinone, via FMN and iron-sulfur (Fe-S) centers, to quinones in the photosynthetic chain and possibly in a chloroplast respiratory chain. The immediate electron acceptor for the enzyme in this species is believed to be plastoquinone. Couples the redox reaction to proton translocation, and thus conserves the redox energy in a proton gradient. The protein is NAD(P)H-quinone oxidoreductase subunit J, chloroplastic of Helianthus annuus (Common sunflower).